A 114-amino-acid chain; its full sequence is Superoxide dismutase [Cu-Zn] (114 aa).

Residues histidine 37, histidine 39, and histidine 54 each coordinate Cu cation. The disordered stretch occupies residues cysteine 48 to glycine 76. Residues histidine 54, histidine 62, histidine 71, and aspartate 74 each contribute to the Zn(2+) site. A compositionally biased stretch (basic and acidic residues) spans arginine 58 to glycine 73. Residue histidine 111 coordinates Cu cation.

This sequence belongs to the Cu-Zn superoxide dismutase family. Homodimer. It depends on Cu cation as a cofactor. Zn(2+) is required as a cofactor.

The protein resides in the cytoplasm. The enzyme catalyses 2 superoxide + 2 H(+) = H2O2 + O2. Destroys radicals which are normally produced within the cells and which are toxic to biological systems. The protein is Superoxide dismutase [Cu-Zn] of Drosophila obscura (Fruit fly).